Here is a 64-residue protein sequence, read N- to C-terminus: Large ribosomal subunit protein uL30 (64 aa).

The protein belongs to the universal ribosomal protein uL30 family. Part of the 50S ribosomal subunit.

The chain is Large ribosomal subunit protein uL30 from Rhodopseudomonas palustris (strain HaA2).